The chain runs to 530 residues: Tryptophan 7-halogenase RebH (530 aa).

Gly-13, Thr-15, Ala-16, Ala-39, Asp-41, Glu-49, and Ala-50 together coordinate FAD. Residue Lys-79 is part of the active site. Positions 197 and 348 each coordinate FAD. Glu-357 provides a ligand contact to L-tryptophan. Chloride is bound by residues Thr-359 and Gly-360. Ile-361 serves as a coordination point for FAD. L-tryptophan-binding residues include Tyr-454, Tyr-455, Glu-461, and Phe-465.

It belongs to the flavin-dependent halogenase family. Bacterial tryptophan halogenase subfamily. As to quaternary structure, homodimer.

The catalysed reaction is L-tryptophan + FADH2 + chloride + O2 = 7-chloro-L-tryptophan + FAD + 2 H2O. Functionally, involved in the biosynthesis of the indolocarbazole antitumor agent rebeccamycin. Catalyzes the chlorination of tryptophan (Trp) at C7 position to yield 7-chlorotryptophan. It is also able to use bromide ions to generate monobrominated Trp. This chain is Tryptophan 7-halogenase RebH (rebH), found in Lentzea aerocolonigenes (Lechevalieria aerocolonigenes).